We begin with the raw amino-acid sequence, 229 residues long: MATELTWHDVLADEKQQPYFINTLHTVAGERQSGITVYPPQKDVFNAFRFTELGDVKVVILGQDPYHGPGQAHGLAFSVRPGIAPPPSLVNIYKELEASIPGFVRPAHGYLESWARQGVLLLNTVLTVRAGQAHSHASLGWETFTDKVISLINQHREGVVFLLWGSHAQKKGAIIDPQRHHILKAPHPSPLSAHRGFFGCNHFALTNQWLEQHGEKTIDWTPVLPAESE.

D64 functions as the Proton acceptor in the catalytic mechanism.

It belongs to the uracil-DNA glycosylase (UDG) superfamily. UNG family.

It is found in the cytoplasm. It catalyses the reaction Hydrolyzes single-stranded DNA or mismatched double-stranded DNA and polynucleotides, releasing free uracil.. Excises uracil residues from the DNA which can arise as a result of misincorporation of dUMP residues by DNA polymerase or due to deamination of cytosine. This is Uracil-DNA glycosylase from Salmonella agona (strain SL483).